Here is a 541-residue protein sequence, read N- to C-terminus: Ankyrin repeat domain-containing protein 13C (541 aa).

The segment covering 1 to 20 has biased composition (basic and acidic residues); sequence MTGEKIRSLRRDHKPSKEEG. The disordered stretch occupies residues 1-27; sequence MTGEKIRSLRRDHKPSKEEGDLLEPGD. 3 ANK repeats span residues 111-142, 143-172, and 176-205; these read PAHYPVHECVFKGDVRRLSSLIRTHNIGQKDN, HGNTPLHLAVMLGNKECAHLLLAHNAPVKV, and QGWSPLAEAISYGDRQMITALLRKLKQQSR. Phosphoserine is present on Ser-411.

It localises to the endoplasmic reticulum membrane. Its function is as follows. Acts as a molecular chaperone for G protein-coupled receptors, regulating their biogenesis and exit from the ER. In Homo sapiens (Human), this protein is Ankyrin repeat domain-containing protein 13C (ANKRD13C).